Reading from the N-terminus, the 75-residue chain is MDIVTLAEVAGNLNVVGYGLAAIGPGIGLGILIGKTIEGTARQPELGSRLQTLMFLGLAFVEVLALLGFVLAFIK.

The next 2 helical transmembrane spans lie at 13–33 (LNVV…GILI) and 54–74 (MFLG…LAFI).

It belongs to the ATPase C chain family. As to quaternary structure, F-type ATPases have 2 components, F(1) - the catalytic core - and F(0) - the membrane proton channel. F(1) has five subunits: alpha(3), beta(3), gamma(1), delta(1), epsilon(1). F(0) has three main subunits: a(1), b(2) and c(10-14). The alpha and beta chains form an alternating ring which encloses part of the gamma chain. F(1) is attached to F(0) by a central stalk formed by the gamma and epsilon chains, while a peripheral stalk is formed by the delta and b chains.

It is found in the cell membrane. Its function is as follows. F(1)F(0) ATP synthase produces ATP from ADP in the presence of a proton or sodium gradient. F-type ATPases consist of two structural domains, F(1) containing the extramembraneous catalytic core and F(0) containing the membrane proton channel, linked together by a central stalk and a peripheral stalk. During catalysis, ATP synthesis in the catalytic domain of F(1) is coupled via a rotary mechanism of the central stalk subunits to proton translocation. Key component of the F(0) channel; it plays a direct role in translocation across the membrane. A homomeric c-ring of between 10-14 subunits forms the central stalk rotor element with the F(1) delta and epsilon subunits. This Bifidobacterium adolescentis (strain ATCC 15703 / DSM 20083 / NCTC 11814 / E194a) protein is ATP synthase subunit c.